A 377-amino-acid polypeptide reads, in one-letter code: Naringenin,2-oxoglutarate 3-dioxygenase (377 aa).

The region spanning 193–297 (CVDMDQKVVV…RLSIATFQNP (105 aa)) is the Fe2OG dioxygenase domain. Residues His220, Asp222, and His278 each coordinate Fe cation. Arg288 provides a ligand contact to 2-oxoglutarate.

This sequence belongs to the iron/ascorbate-dependent oxidoreductase family. It depends on Fe(2+) as a cofactor. The cofactor is L-ascorbate.

It carries out the reaction a (2S)-flavan-4-one + 2-oxoglutarate + O2 = a (2R,3R)-dihydroflavonol + succinate + CO2. Its pathway is secondary metabolite biosynthesis; flavonoid biosynthesis. Its function is as follows. Catalyzes the 3-beta-hydroxylation of 2S-flavanones to 2R,3R-dihydroflavonols which are intermediates in the biosynthesis of flavonols, anthocyanidins, catechins and proanthocyanidins in plants. This is Naringenin,2-oxoglutarate 3-dioxygenase from Hordeum vulgare (Barley).